The primary structure comprises 305 residues: tRNA dimethylallyltransferase (305 aa).

Residue 8 to 15 (GPTAVGKT) coordinates ATP. Substrate is bound at residue 10-15 (TAVGKT). Residues 33 to 36 (DSRQ) form an interaction with substrate tRNA region.

This sequence belongs to the IPP transferase family. Monomer. Mg(2+) is required as a cofactor.

The catalysed reaction is adenosine(37) in tRNA + dimethylallyl diphosphate = N(6)-dimethylallyladenosine(37) in tRNA + diphosphate. Its function is as follows. Catalyzes the transfer of a dimethylallyl group onto the adenine at position 37 in tRNAs that read codons beginning with uridine, leading to the formation of N6-(dimethylallyl)adenosine (i(6)A). The sequence is that of tRNA dimethylallyltransferase from Thermotoga petrophila (strain ATCC BAA-488 / DSM 13995 / JCM 10881 / RKU-1).